The chain runs to 249 residues: Oxidoreductase asL5 (249 aa).

The NADP(+) site is built by Ile21, Lys45, Asn90, Tyr155, Lys159, Ile188, and Thr190. Tyr155 acts as the Proton acceptor in catalysis. Lys159 acts as the Lowers pKa of active site Tyr in catalysis.

Belongs to the short-chain dehydrogenases/reductases (SDR) family.

Its function is as follows. Oxidoreductase; part of the gene cluster that mediates the biosynthesis of xenovulene A, an unusual meroterpenoid that has potent inhibitory effects on the human gamma-aminobutyrate A (GABAA) benzodiazepine receptor. The first step of xenovulene A biosynthesis is the biosynthesis of 3-methylorcinaldehyde performed by the non-reducing polyketide synthase aspks1. The salicylate hydroxylase asL1 then catalyzes the oxidative dearomatization of 3-methylorcinaldehyde to yield a dearomatized hydroxycyclohexadione. The 2-oxoglutarate-dependent dioxygenase asL3 further catalyzes the oxidative ring expansion to provide the first tropolone metabolite. The cytochrome P450 monooxygenase asR2 allows the synthesis of tropolone hemiacetal. In parallel, a previously unrecognised class of terpene cyclase, asR6, produces alpha-humulene from farnesylpyrophosphate (FPP). The putative Diels-Alderase asR5 probably catalyzes the formation of the tropolone-humulene skeleton by linking humulene and the polyketide moiety. Oxidative-ring contractions catalyzed by asL4 and asL6 then processively remove carbon atoms from the polyketide to yield xenovulene A. The protein is Oxidoreductase asL5 of Sarocladium schorii (Acremonium strictum (strain IMI 501407)).